A 258-amino-acid polypeptide reads, in one-letter code: Proteasome subunit alpha (258 aa).

It belongs to the peptidase T1A family. In terms of assembly, the 20S proteasome core is composed of 14 alpha and 14 beta subunits that assemble into four stacked heptameric rings, resulting in a barrel-shaped structure. The two inner rings, each composed of seven catalytic beta subunits, are sandwiched by two outer rings, each composed of seven alpha subunits. The catalytic chamber with the active sites is on the inside of the barrel. Has a gated structure, the ends of the cylinder being occluded by the N-termini of the alpha-subunits. Is capped at one or both ends by the proteasome regulatory ATPase, PAN.

It localises to the cytoplasm. Its activity is regulated as follows. The formation of the proteasomal ATPase PAN-20S proteasome complex, via the docking of the C-termini of PAN into the intersubunit pockets in the alpha-rings, triggers opening of the gate for substrate entry. Interconversion between the open-gate and close-gate conformations leads to a dynamic regulation of the 20S proteasome proteolysis activity. Component of the proteasome core, a large protease complex with broad specificity involved in protein degradation. This Aeropyrum pernix (strain ATCC 700893 / DSM 11879 / JCM 9820 / NBRC 100138 / K1) protein is Proteasome subunit alpha.